The following is a 75-amino-acid chain: Small ribosomal subunit protein bS18c (75 aa).

Belongs to the bacterial ribosomal protein bS18 family. In terms of assembly, part of the 30S ribosomal subunit.

It is found in the plastid. The sequence is that of Small ribosomal subunit protein bS18c from Aneura mirabilis (Parasitic liverwort).